Here is a 471-residue protein sequence, read N- to C-terminus: MANTQAAVGKIVQCIGAVVDVEFPRDQMPRVYDALKMEGSALTLEVQQQLGDGVVRTIALGSSDGLRRGLMVSNTGAAITVPVGKATLGRIMDVLGSPIDERGPVSAELSMPIHRKAPAYDELSPSQELLETGIKVIDLICPFAKGGKVGLFGGAGVGKTVNMMELINNIAKAHSGLSVFAGVGERTREGNDFYHEMSDSKVVVQEDLTQSKVAMVYGQMNEPPGNRLRVALTGLTIAESFRDEGRDVLFFVDNIYRYTLAGTEVSALLGRMPSAVGYQPTLAEEMGRLQERITSTKVGSITSIQAVYVPADDLTDPSPATTFAHLDATVVLSRDIASLGIYPAVDPLDSTSRQIDPNVVGEEHYNTTRAVQQVLQRYKELRDIIAILGMDELAPEDKLAVARARKIQRFLSQPFHVAEVFTGSPGKYVPLKETIRGFKMIVAGECDSLPEQAFYMVGTIDEAFEKAKKIQ.

153–160 (GGAGVGKT) is an ATP binding site.

It belongs to the ATPase alpha/beta chains family. In terms of assembly, F-type ATPases have 2 components, CF(1) - the catalytic core - and CF(0) - the membrane proton channel. CF(1) has five subunits: alpha(3), beta(3), gamma(1), delta(1), epsilon(1). CF(0) has four main subunits: a(1), b(1), b'(1) and c(9-12).

Its subcellular location is the cell inner membrane. The catalysed reaction is ATP + H2O + 4 H(+)(in) = ADP + phosphate + 5 H(+)(out). Its function is as follows. Produces ATP from ADP in the presence of a proton gradient across the membrane. The catalytic sites are hosted primarily by the beta subunits. This chain is ATP synthase subunit beta, found in Methylibium petroleiphilum (strain ATCC BAA-1232 / LMG 22953 / PM1).